The chain runs to 254 residues: Large ribosomal subunit protein uL4 (254 aa).

Residues 45–70 form a disordered region; it reads PWGNDPEAGKRTSAKGWGSGRGTARV.

Belongs to the universal ribosomal protein uL4 family. Part of the 50S ribosomal subunit.

Its function is as follows. One of the primary rRNA binding proteins, this protein initially binds near the 5'-end of the 23S rRNA. It is important during the early stages of 50S assembly. It makes multiple contacts with different domains of the 23S rRNA in the assembled 50S subunit and ribosome. In terms of biological role, forms part of the polypeptide exit tunnel. The chain is Large ribosomal subunit protein uL4 from Methanobrevibacter smithii (strain ATCC 35061 / DSM 861 / OCM 144 / PS).